The sequence spans 261 residues: Phosphatidylglycerol--prolipoprotein diacylglyceryl transferase (261 aa).

4 helical membrane passes run 12 to 32 (ISIR…VYLA), 41 to 61 (IIPD…IVGA), 87 to 107 (GIAG…LYFF), and 112 to 132 (LIHP…AQSI). Arginine 134 contributes to the a 1,2-diacyl-sn-glycero-3-phospho-(1'-sn-glycerol) binding site. Transmembrane regions (helical) follow at residues 170 to 190 (QPTF…IIVL), 200 to 220 (GEIA…IEGM), and 229 to 249 (GLRV…GIII).

Belongs to the Lgt family.

The protein localises to the cell membrane. It catalyses the reaction L-cysteinyl-[prolipoprotein] + a 1,2-diacyl-sn-glycero-3-phospho-(1'-sn-glycerol) = an S-1,2-diacyl-sn-glyceryl-L-cysteinyl-[prolipoprotein] + sn-glycerol 1-phosphate + H(+). It participates in protein modification; lipoprotein biosynthesis (diacylglyceryl transfer). Catalyzes the transfer of the diacylglyceryl group from phosphatidylglycerol to the sulfhydryl group of the N-terminal cysteine of a prolipoprotein, the first step in the formation of mature lipoproteins. This is Phosphatidylglycerol--prolipoprotein diacylglyceryl transferase from Streptococcus sanguinis (strain SK36).